The chain runs to 374 residues: Lipoyl synthase, mitochondrial (374 aa).

The transit peptide at 1–19 directs the protein to the mitochondrion; the sequence is MHSRSALLYRFLRPASRCF. Cys103, Cys108, Cys114, Cys134, Cys138, Cys141, and Ser350 together coordinate [4Fe-4S] cluster. In terms of domain architecture, Radical SAM core spans 119-339; the sequence is ETGTATATIM…RLLGMEMGFR (221 aa).

It belongs to the radical SAM superfamily. Lipoyl synthase family. [4Fe-4S] cluster serves as cofactor. As to expression, expressed in leaves and flowers, but not in roots. Expressed in roots, rosette leaves, cauline leaves, stems, flowers and siliques.

The protein resides in the mitochondrion. It carries out the reaction [[Fe-S] cluster scaffold protein carrying a second [4Fe-4S](2+) cluster] + N(6)-octanoyl-L-lysyl-[protein] + 2 oxidized [2Fe-2S]-[ferredoxin] + 2 S-adenosyl-L-methionine + 4 H(+) = [[Fe-S] cluster scaffold protein] + N(6)-[(R)-dihydrolipoyl]-L-lysyl-[protein] + 4 Fe(3+) + 2 hydrogen sulfide + 2 5'-deoxyadenosine + 2 L-methionine + 2 reduced [2Fe-2S]-[ferredoxin]. The protein operates within protein modification; protein lipoylation via endogenous pathway; protein N(6)-(lipoyl)lysine from octanoyl-[acyl-carrier-protein]: step 2/2. Functionally, catalyzes the radical-mediated insertion of two sulfur atoms into the C-6 and C-8 positions of the octanoyl moiety bound to the lipoyl domains of lipoate-dependent enzymes, thereby converting the octanoylated domains into lipoylated derivatives. Together with LIP2 is essential for mitochondrial protein lipoylation during seed development. Required for the lipoylation of mitochondrial pyruvate dehydrogenase component E2 proteins in leaves and roots. The protein is Lipoyl synthase, mitochondrial of Arabidopsis thaliana (Mouse-ear cress).